The primary structure comprises 221 residues: SIN3-HDAC complex-associated factor (221 aa).

Over residues 112 to 121 the composition is skewed to basic and acidic residues; it reads QKEFKRHNSD. Disordered regions lie at residues 112 to 152 and 201 to 221; these read QKEF…MASG and AAAE…TQEW. Residues 124–135 are compositionally biased toward low complexity; it reads STTSSASPAQSP. Residues 136-152 show a composition bias toward polar residues; sequence CYSNQSDDGSDTEMASG.

The protein belongs to the SINHCAF family. In terms of assembly, interacts with the Sin3/HDAC corepressor complex at least composed of BRMS1, BRMS1L, ING2, SAP30, SAP30L and HDAC1. Found in a complex composed of at least SINHCAF, SIN3A, HDAC1, SAP30, RBBP4, OGT and TET1. Interacts with SIN3A and OGT.

Its subcellular location is the nucleus. Functionally, subunit of the Sin3 deacetylase complex (Sin3/HDAC), this subunit is important for the repression of genes encoding components of the TGF-beta signaling pathway. Core component of a SIN3A complex (composed of at least SINHCAF, SIN3A, HDAC1, SAP30, RBBP4, OGT and TET1) present in embryonic stem (ES) cells. Promotes the stability of SIN3A and its presence on chromatin and is essential for maintaining the potential of ES cells to proliferate rapidly, while ensuring a short G1-phase of the cell cycle, thereby preventing premature lineage priming. The sequence is that of SIN3-HDAC complex-associated factor from Homo sapiens (Human).